The primary structure comprises 281 residues: Undecaprenyl-diphosphatase (281 aa).

The next 6 helical transmembrane spans lie at Trp-90–Ile-110, Val-113–Ala-133, Leu-147–Val-167, Ser-191–Leu-211, Ile-217–Ile-237, and Ile-257–Gly-277.

This sequence belongs to the UppP family.

It localises to the cell membrane. It catalyses the reaction di-trans,octa-cis-undecaprenyl diphosphate + H2O = di-trans,octa-cis-undecaprenyl phosphate + phosphate + H(+). In terms of biological role, catalyzes the dephosphorylation of undecaprenyl diphosphate (UPP). Confers resistance to bacitracin. In Kineococcus radiotolerans (strain ATCC BAA-149 / DSM 14245 / SRS30216), this protein is Undecaprenyl-diphosphatase.